Reading from the N-terminus, the 259-residue chain is Sesquipedalian-2 (259 aa).

One can recognise a PH domain in the interval Pro17–Phe121. Positions Met124 to Gln150 form a coiled coil. The interval Ser155–Asp178 is disordered. Positions Ala161–Asp178 are enriched in basic and acidic residues. The F&amp;H signature appears at Cys223–Ile235.

The protein belongs to the sesquipedalian family. In terms of assembly, forms homodimers and heterodimers with PHETA1. Interacts with OCRL and INPP5B.

Its subcellular location is the early endosome. It is found in the recycling endosome. It localises to the golgi apparatus. The protein localises to the trans-Golgi network. The protein resides in the cytoplasmic vesicle. Its subcellular location is the clathrin-coated vesicle. Functionally, plays a role in endocytic trafficking. Required for receptor recycling from endosomes, both to the trans-Golgi network and the plasma membrane. The protein is Sesquipedalian-2 of Mus musculus (Mouse).